We begin with the raw amino-acid sequence, 281 residues long: Phosphate import ATP-binding protein PstB 1 (281 aa).

Positions 1–34 (MTENTAETADESSDGGVTATTGAATTTPTTPPEP) are disordered. Low complexity predominate over residues 15-28 (GGVTATTGAATTTP). Residues 36 to 276 (IRARDLDVFY…PEHQRVEEYI (241 aa)) enclose the ABC transporter domain. 68–75 (GPSGCGKS) contacts ATP.

This sequence belongs to the ABC transporter superfamily. Phosphate importer (TC 3.A.1.7) family. As to quaternary structure, the complex is composed of two ATP-binding proteins (PstB), two transmembrane proteins (PstC and PstA) and a solute-binding protein (PstS).

The protein localises to the cell membrane. It carries out the reaction phosphate(out) + ATP + H2O = ADP + 2 phosphate(in) + H(+). Its function is as follows. Part of the ABC transporter complex PstSACB involved in phosphate import. Responsible for energy coupling to the transport system. This Halobacterium salinarum (strain ATCC 700922 / JCM 11081 / NRC-1) (Halobacterium halobium) protein is Phosphate import ATP-binding protein PstB 1.